Consider the following 154-residue polypeptide: Small ribosomal subunit protein uS11c (154 aa).

This sequence belongs to the universal ribosomal protein uS11 family. As to quaternary structure, part of the 30S ribosomal subunit.

The protein resides in the plastid. This chain is Small ribosomal subunit protein uS11c, found in Helicosporidium sp. subsp. Simulium jonesii (Green alga).